The following is an 874-amino-acid chain: MKAAEIREKFLKFFESKGHTIVRSSSLVPGNDPTLLFTNSGMVQFKDVFLGAETRPYSRATTAQRSVRAGGKHNDLENVGYTARHHTFFEMLGNFSFGDYFKRDAIHYAWELLTSVYKLPADKLWVTVYHDDDEAYDIWAKEVGVPAERIIRIGDNKGARYASDNFWQMGDTGPCGPCSEIFYDHGPDVWGGPPGSPEEDGDRYIEIWNLVFMQFNRDAQGNMTRLPKPCVDTGMGLERIAAVLQHVHSNYEIDLFQQLIKASARETGVADLANNSLKVIADHIRACSFLIVDGVIPGNEGRGYVLRRIVRRAIRHGYKLGRKAPFFHKLVADLVAEMGAAYPELKEAEPRVTDVLRQEEERFFETIEHGMSILEAALAELDAAGGKTLDGELAFKLHDTYGFPLDLTADVCRERGVTVDEPAFDDAMARQREQARAAGKFKATQGLEYTGAKTTFHGYEEIAFDDAKVVALYVEGASVGEVKAGESAVVVLDHTPFYAESGGQVGDQGVLANAATRFAVGDTLKVQADVIGHHGELEQGTLKVGDVVRAEIDAARRARTARNHSATHLMHKALRDVLGSHVQQKGSLVDADKTRFDFAHNAPLTDDEIRRVEAIVNEQVLANAPGIVRVMPYDDAVKGGAMALFGEKYGDEVRVLDLGFSRELCGGTHVHRTGDIGLFKIVAEGGVAAGIRRVEAITGDNAVRYVQALDARVNAAAAALKAQPSELLQRIGQVQDQVKSLEKELGALKSRLASSQGDELAQQAVEVGGVHVLAATLDGADAKTLRETVDKLKDKLKSAAIVLAAVDGGKVSLIAGVTADASKKVKAGELVNFVAQQVGGKGGGRPDMAQAGGTEPAKLPAALAGVKGWVEARL.

Residues H564, H568, C665, and H669 each contribute to the Zn(2+) site.

This sequence belongs to the class-II aminoacyl-tRNA synthetase family. The cofactor is Zn(2+).

It localises to the cytoplasm. It catalyses the reaction tRNA(Ala) + L-alanine + ATP = L-alanyl-tRNA(Ala) + AMP + diphosphate. Its function is as follows. Catalyzes the attachment of alanine to tRNA(Ala) in a two-step reaction: alanine is first activated by ATP to form Ala-AMP and then transferred to the acceptor end of tRNA(Ala). Also edits incorrectly charged Ser-tRNA(Ala) and Gly-tRNA(Ala) via its editing domain. This is Alanine--tRNA ligase from Burkholderia pseudomallei (strain 668).